The following is a 101-amino-acid chain: Large ribosomal subunit protein uL24 (101 aa).

The protein belongs to the universal ribosomal protein uL24 family. In terms of assembly, part of the 50S ribosomal subunit.

In terms of biological role, one of two assembly initiator proteins, it binds directly to the 5'-end of the 23S rRNA, where it nucleates assembly of the 50S subunit. Functionally, one of the proteins that surrounds the polypeptide exit tunnel on the outside of the subunit. In Streptococcus agalactiae serotype III (strain NEM316), this protein is Large ribosomal subunit protein uL24.